The primary structure comprises 293 residues: Elongation factor Ts (293 aa).

Residues threonine 79 to valine 82 are involved in Mg(2+) ion dislocation from EF-Tu.

The protein belongs to the EF-Ts family.

It is found in the cytoplasm. Its function is as follows. Associates with the EF-Tu.GDP complex and induces the exchange of GDP to GTP. It remains bound to the aminoacyl-tRNA.EF-Tu.GTP complex up to the GTP hydrolysis stage on the ribosome. This is Elongation factor Ts from Bacillus licheniformis (strain ATCC 14580 / DSM 13 / JCM 2505 / CCUG 7422 / NBRC 12200 / NCIMB 9375 / NCTC 10341 / NRRL NRS-1264 / Gibson 46).